The chain runs to 3933 residues: Protein DOP1 homolog PFC0245c (3933 aa).

4 helical membrane-spanning segments follow: residues 70 to 90 (LNPLLPSGVHSKALIIYSSIF), 98 to 118 (FINNIHILCSGIFEFMLHCTI), 140 to 160 (IFAYALLLSLFNVVDSDNNIL), and 163 to 183 (IYSINNYIGENIFFNNIWLLL). Disordered regions lie at residues 468–494 (RLNNNNNNNNNNNNNNNNNGDNLKYQG), 543–600 (ININ…NMLH), and 614–656 (KKIN…SSSS). A compositionally biased stretch (low complexity) spans 470–486 (NNNNNNNNNNNNNNNNN). Acidic residues predominate over residues 546 to 561 (NDDDNLNYDDNEDDEY). Low complexity-rich tracts occupy residues 563–576 (NYHNNNYNDRNYFN) and 585–597 (ENNNNNNHSNNNN). The stretch at 620–651 (GQTNNYDDDEEEEDEEEEDNNNNTSYNNNNNN) forms a coiled coil. Acidic residues predominate over residues 625 to 639 (YDDDEEEEDEEEEDN). The segment covering 640–656 (NNNTSYNNNNNNSSSSS) has biased composition (low complexity). The next 3 helical transmembrane spans lie at 782 to 802 (MLNLNLISYENILNIFLYTFY), 842 to 862 (YLYIQFLFHFNLATLKLMNFL), and 1186 to 1206 (FYFWCFLFLHIIRINFNKSLL). A compositionally biased stretch (acidic residues) spans 1216–1255 (DDTDDDDDDDDDDDDEEEDDDDEDDDDEDDEEEDDEEDLG). Disordered regions lie at residues 1216–1284 (DDTD…MNKK) and 1361–1405 (TNNN…NNFN). Residues 1263–1284 (SSKKGKKKKKKSVHKNKLMNKK) show a composition bias toward basic residues. A coiled-coil region spans residues 1349 to 1403 (ELNKMKYMNEDITNNNNNINNNSNNNNNNKNNINNNNNNNNNNNNNNNNLNNLNN). A compositionally biased stretch (low complexity) spans 1362–1405 (NNNNNINNNSNNNNNNKNNINNNNNNNNNNNNNNNNLNNLNNFN). 2 helical membrane-spanning segments follow: residues 1462–1482 (FIKLFFDINYLYFFCDNMFCL) and 1997–2017 (KNIFFIMKFCQFLIEIFKLIY). Residues 2691–2739 (HRRKMNRQNIRTDSSNNNNNNNINSNNNNNNNNNNNNNNNNNNNNNIYN) form a disordered region. Residues 2704 to 2739 (SSNNNNNNNINSNNNNNNNNNNNNNNNNNNNNNIYN) are compositionally biased toward low complexity. The next 5 helical transmembrane spans lie at 2860–2880 (INLNEFMYFLFNIYLNICTLT), 2905–2925 (IMSSLWFLYILFIIENNHIYV), 3017–3037 (YSEIAAINALSFLLMCFYHTV), 3200–3220 (ILILICIIIIKNDENEIYIII), and 3276–3296 (IIINILIKRNVSFINFYSWIF). The tract at residues 3620-3646 (LKNEKSTRTYNSSLQEGSDYDEEEDEE) is disordered. Residues 3637–3646 (SDYDEEEDEE) are compositionally biased toward acidic residues. Residues 3897-3925 (KEETIILLKELNSVENDINDLFLEVDLNE) adopt a coiled-coil conformation.

The protein belongs to the DOP1 family.

It is found in the membrane. May be involved in protein traffic between late Golgi and early endosomes. This chain is Protein DOP1 homolog PFC0245c, found in Plasmodium falciparum (isolate 3D7).